The primary structure comprises 280 residues: 4-diphosphocytidyl-2-C-methyl-D-erythritol kinase (280 aa).

The active site involves Lys8. 91-101 (PVAAGLAGGST) is an ATP binding site. The active site involves Asp133.

It belongs to the GHMP kinase family. IspE subfamily.

The enzyme catalyses 4-CDP-2-C-methyl-D-erythritol + ATP = 4-CDP-2-C-methyl-D-erythritol 2-phosphate + ADP + H(+). It participates in isoprenoid biosynthesis; isopentenyl diphosphate biosynthesis via DXP pathway; isopentenyl diphosphate from 1-deoxy-D-xylulose 5-phosphate: step 3/6. Functionally, catalyzes the phosphorylation of the position 2 hydroxy group of 4-diphosphocytidyl-2C-methyl-D-erythritol. The sequence is that of 4-diphosphocytidyl-2-C-methyl-D-erythritol kinase from Clostridium botulinum (strain Okra / Type B1).